Here is a 276-residue protein sequence, read N- to C-terminus: Radial spoke head protein 9 homolog (276 aa).

The protein belongs to the flagellar radial spoke RSP9 family. In terms of assembly, component of the axonemal radial spoke 1 (RS1) and 2 (RS2) complexes, at least composed of spoke head proteins RSPH1, RSPH3, RSPH9 and the cilia-specific component RSPH4A or sperm-specific component RSPH6A, spoke stalk proteins RSPH14, DNAJB13, DYDC1, ROPN1L and NME5, and the RS1 complex-specific anchor protein IQUB. Interacts with IQUB. Interacts with RSPH3B. Interacts with RSPH4A. Interacts with RSPH6A. Interacts with CFAP61. Interacts with LRRC23.

Its subcellular location is the cytoplasm. The protein localises to the cytoskeleton. It localises to the cilium axoneme. It is found in the flagellum axoneme. The protein resides in the cell projection. Its subcellular location is the kinocilium. Its function is as follows. Functions as part of axonemal radial spoke complexes that play an important part in the motility of sperm and cilia. Essential for both the radial spoke head assembly and the central pair microtubule stability in ependymal motile cilia. Required for motility of olfactory and neural cilia and for the structural integrity of ciliary axonemes in both 9+0 and 9+2 motile cilia. The sequence is that of Radial spoke head protein 9 homolog (RSPH9) from Bos taurus (Bovine).